Reading from the N-terminus, the 338-residue chain is DNA-directed RNA polymerase subunit alpha (338 aa).

Residues 1–234 (MIHKNWAELI…DQLSIFVNFD (234 aa)) are alpha N-terminal domain (alpha-NTD). An alpha C-terminal domain (alpha-CTD) region spans residues 250 to 338 (FNPLLLKKVD…DLAKKFEDAF (89 aa)).

It belongs to the RNA polymerase alpha chain family. As to quaternary structure, homodimer. The RNAP catalytic core consists of 2 alpha, 1 beta, 1 beta' and 1 omega subunit. When a sigma factor is associated with the core the holoenzyme is formed, which can initiate transcription.

The enzyme catalyses RNA(n) + a ribonucleoside 5'-triphosphate = RNA(n+1) + diphosphate. In terms of biological role, DNA-dependent RNA polymerase catalyzes the transcription of DNA into RNA using the four ribonucleoside triphosphates as substrates. This Ruegeria pomeroyi (strain ATCC 700808 / DSM 15171 / DSS-3) (Silicibacter pomeroyi) protein is DNA-directed RNA polymerase subunit alpha.